Reading from the N-terminus, the 65-residue chain is MAMKIDPELCTSCGDCEPVCPTNAIAPKKGVYVINADTCTECEGEHDLPQCVNACMTDNCINPAA.

Positions Ala2 to Gly30 constitute a 4Fe-4S ferredoxin-type domain. Cys10, Cys13, Cys16, Cys20, Cys39, Cys42, Cys51, and Cys55 together coordinate [4Fe-4S] cluster.

It depends on [4Fe-4S] cluster as a cofactor.

Functionally, ferredoxins are iron-sulfur proteins that transfer electrons in a wide variety of metabolic reactions. This ferredoxin probably participates in nitrogen fixation. The polypeptide is Ferredoxin-1 (fdxN) (Rhodobacter capsulatus (Rhodopseudomonas capsulata)).